The following is a 347-amino-acid chain: NADH-ubiquinone oxidoreductase chain 2 (347 aa).

Transmembrane regions (helical) follow at residues 3–23, 25–45, 59–79, 111–131, 149–169, 200–220, 242–262, 274–294, and 325–345; these read PPIF…VLIS, HWLL…PILM, YFLT…INLL, FHFW…MILL, INPN…GWGG, LMHL…MLFM, LLIL…GFIP, NMII…YFYM, and LLPP…MMLI.

Belongs to the complex I subunit 2 family. As to quaternary structure, core subunit of respiratory chain NADH dehydrogenase (Complex I) which is composed of 45 different subunits. Interacts with TMEM242.

The protein resides in the mitochondrion inner membrane. It carries out the reaction a ubiquinone + NADH + 5 H(+)(in) = a ubiquinol + NAD(+) + 4 H(+)(out). Functionally, core subunit of the mitochondrial membrane respiratory chain NADH dehydrogenase (Complex I) which catalyzes electron transfer from NADH through the respiratory chain, using ubiquinone as an electron acceptor. Essential for the catalytic activity and assembly of complex I. This is NADH-ubiquinone oxidoreductase chain 2 from Ailurus fulgens (Himalayan red panda).